A 370-amino-acid polypeptide reads, in one-letter code: Cytochrome b (370 aa).

Helical transmembrane passes span 25–45, 69–90, 105–125, and 170–190; these read FGSM…FLAV, WLMQ…YIHI, WLSG…GYVL, and FFAL…LHIL. Heme b-binding residues include His-75 and His-89. Heme b is bound by residues His-174 and His-188. An a ubiquinone-binding site is contributed by His-193. A run of 4 helical transmembrane segments spans residues 218-238, 280-300, 312-332, and 339-358; these read YKDL…VSFF, LGGA…PFTH, LMQL…WSST, and FTTI…ISKP.

It belongs to the cytochrome b family. As to quaternary structure, the cytochrome bc1 complex contains 3 respiratory subunits (MT-CYB, CYC1 and UQCRFS1), 2 core proteins (UQCRC1 and UQCRC2) and probably 6 low-molecular weight proteins. Heme b serves as cofactor.

Its subcellular location is the mitochondrion inner membrane. Functionally, component of the ubiquinol-cytochrome c reductase complex (complex III or cytochrome b-c1 complex) that is part of the mitochondrial respiratory chain. The b-c1 complex mediates electron transfer from ubiquinol to cytochrome c. Contributes to the generation of a proton gradient across the mitochondrial membrane that is then used for ATP synthesis. This Chilabothrus subflavus (Jamaican yellow boa) protein is Cytochrome b (MT-CYB).